The sequence spans 263 residues: Acyl-[acyl-carrier-protein]--UDP-N-acetylglucosamine O-acyltransferase (263 aa).

The protein belongs to the transferase hexapeptide repeat family. LpxA subfamily. As to quaternary structure, homotrimer.

It is found in the cytoplasm. The enzyme catalyses a (3R)-hydroxyacyl-[ACP] + UDP-N-acetyl-alpha-D-glucosamine = a UDP-3-O-[(3R)-3-hydroxyacyl]-N-acetyl-alpha-D-glucosamine + holo-[ACP]. It participates in glycolipid biosynthesis; lipid IV(A) biosynthesis; lipid IV(A) from (3R)-3-hydroxytetradecanoyl-[acyl-carrier-protein] and UDP-N-acetyl-alpha-D-glucosamine: step 1/6. Functionally, involved in the biosynthesis of lipid A, a phosphorylated glycolipid that anchors the lipopolysaccharide to the outer membrane of the cell. This is Acyl-[acyl-carrier-protein]--UDP-N-acetylglucosamine O-acyltransferase from Xanthomonas campestris pv. campestris (strain 8004).